Reading from the N-terminus, the 628-residue chain is Beta-galactosidase large subunit (628 aa).

The active-site Proton donor is E468. The active-site Nucleophile is E536.

The protein belongs to the glycosyl hydrolase 2 family. Heterodimer of a large (LacL) and a small subunit (LacM).

It catalyses the reaction Hydrolysis of terminal non-reducing beta-D-galactose residues in beta-D-galactosides.. Functionally, component of a beta-galactosidase. The polypeptide is Beta-galactosidase large subunit (Lactobacillus helveticus (Lactobacillus suntoryeus)).